We begin with the raw amino-acid sequence, 395 residues long: Flap endonuclease 1 (395 aa).

The tract at residues 1–104 (MGIKHLYQII…GELAKRFMRK (104 aa)) is N-domain. Asp34 contributes to the Mg(2+) binding site. DNA contacts are provided by Arg47 and Arg70. Residues Asp86, Glu158, Glu160, Asp179, and Asp181 each coordinate Mg(2+). The I-domain stretch occupies residues 122–253 (EVEKFSRRTV…NTALKLIRDH (132 aa)). A DNA-binding site is contributed by Glu158. 2 residues coordinate DNA: Gly231 and Asp233. Mg(2+) is bound at residue Asp233. An interaction with PCNA region spans residues 341 to 349 (QQSRLEGFF). Over residues 360-389 (AVLKRKHEEKLELQKKKKKEDSKAKKEAKS) the composition is skewed to basic and acidic residues. Positions 360–395 (AVLKRKHEEKLELQKKKKKEDSKAKKEAKSKPRGTT) are disordered.

This sequence belongs to the XPG/RAD2 endonuclease family. FEN1 subfamily. Interacts with PCNA. Three molecules of FEN1 bind to one PCNA trimer with each molecule binding to one PCNA monomer. PCNA stimulates the nuclease activity without altering cleavage specificity. The cofactor is Mg(2+). In terms of processing, phosphorylated. Phosphorylation upon DNA damage induces relocalization to the nuclear plasma.

It localises to the nucleus. It is found in the nucleolus. Its subcellular location is the nucleoplasm. The protein localises to the mitochondrion. Structure-specific nuclease with 5'-flap endonuclease and 5'-3' exonuclease activities involved in DNA replication and repair. During DNA replication, cleaves the 5'-overhanging flap structure that is generated by displacement synthesis when DNA polymerase encounters the 5'-end of a downstream Okazaki fragment. It enters the flap from the 5'-end and then tracks to cleave the flap base, leaving a nick for ligation. Also involved in the long patch base excision repair (LP-BER) pathway, by cleaving within the apurinic/apyrimidinic (AP) site-terminated flap. Acts as a genome stabilization factor that prevents flaps from equilibrating into structures that lead to duplications and deletions. Also possesses 5'-3' exonuclease activity on nicked or gapped double-stranded DNA, and exhibits RNase H activity. Also involved in replication and repair of rDNA and in repairing mitochondrial DNA. The protein is Flap endonuclease 1 of Ajellomyces capsulatus (strain H143) (Darling's disease fungus).